The chain runs to 238 residues: Ubiquinone biosynthesis O-methyltransferase (238 aa).

Arginine 40, glycine 59, aspartate 80, and methionine 124 together coordinate S-adenosyl-L-methionine.

It belongs to the methyltransferase superfamily. UbiG/COQ3 family.

It catalyses the reaction a 3-demethylubiquinol + S-adenosyl-L-methionine = a ubiquinol + S-adenosyl-L-homocysteine + H(+). The catalysed reaction is a 3-(all-trans-polyprenyl)benzene-1,2-diol + S-adenosyl-L-methionine = a 2-methoxy-6-(all-trans-polyprenyl)phenol + S-adenosyl-L-homocysteine + H(+). It functions in the pathway cofactor biosynthesis; ubiquinone biosynthesis. In terms of biological role, O-methyltransferase that catalyzes the 2 O-methylation steps in the ubiquinone biosynthetic pathway. This Ralstonia nicotianae (strain ATCC BAA-1114 / GMI1000) (Ralstonia solanacearum) protein is Ubiquinone biosynthesis O-methyltransferase.